We begin with the raw amino-acid sequence, 203 residues long: Cardiotrophin-1 (203 aa).

It belongs to the IL-6 superfamily. In terms of tissue distribution, expressed in the ventricle and atrium of adult rats. Also detected in the lung, kidney, liver, skeletal muscle, stomach and urinary bladder. Not detected in brain, colon, testis, spleen or thymus. Overexpressed in the ventricles in the case of hypertension and hypertrophy.

The protein resides in the secreted. Its function is as follows. Induces cardiac myocyte hypertrophy in vitro. Binds to and activates the ILST/gp130 receptor. The polypeptide is Cardiotrophin-1 (Ctf1) (Rattus norvegicus (Rat)).